Reading from the N-terminus, the 952-residue chain is GATA zinc finger domain-containing protein 5 (952 aa).

2 disordered regions span residues 1–36 and 138–197; these read MDYQ…DSPS and PTPL…SPKQ. Residues 10–24 are compositionally biased toward polar residues; the sequence is QISQEFPTDISTTKS. Positions 148–157 are enriched in pro residues; that stretch reads SPPPPPPPPA. Positions 158 to 196 are enriched in low complexity; that stretch reads ATTTTTITTTTTTSAGNSTTKNNNNNNNNNNNNNGKSPK. The segment at 241-266 adopts a GATA-type zinc-finger fold; sequence CYQCNTSNTPEWRKGPEGPATLCNAC. Disordered regions lie at residues 380 to 418, 433 to 478, 634 to 699, and 732 to 816; these read MTPS…HEQP, LLSS…GGGG, QNNS…NKNN, and QQQE…LSVN. Positions 393-412 are enriched in basic residues; that stretch reads KTTKTKPKPKSKSKPGKITH. Positions 445 to 467 are enriched in low complexity; that stretch reads SSSSSCGTSLNSSLGSSSGTITN. The span at 468–478 shows a compositional bias: gly residues; the sequence is SGGGSSGGGGG. Residues 634–653 are compositionally biased toward polar residues; that stretch reads QNNSFSGPNDQNPYVPSVSL. 3 stretches are compositionally biased toward low complexity: residues 654–668, 678–699, and 732–745; these read NSNK…NNNK, NNKN…NKNN, and QQQE…EQQQ. Residues 746-762 show a composition bias toward polar residues; the sequence is NLSINNSNQTNENEILG. Low complexity predominate over residues 763–814; it reads TTTTTTTSTATIITSQVPMNLSPNSDDNQSSSNYSTLSDSGSSPTDSFSGLS.

The protein is GATA zinc finger domain-containing protein 5 (gtaE) of Dictyostelium discoideum (Social amoeba).